Consider the following 298-residue polypeptide: Glutamyl-Q tRNA(Asp) synthetase (298 aa).

Residues 9-13 (RFAPS) and glutamate 45 each bind L-glutamate. Residues 12–22 (PSPSGELHFGS) carry the 'HIGH' region motif. 4 residues coordinate Zn(2+): cysteine 101, cysteine 103, tyrosine 115, and cysteine 119. Residues tyrosine 172 and arginine 190 each contribute to the L-glutamate site. The 'KMSKS' region signature appears at 228-232 (KLSKQ). Lysine 231 is a binding site for ATP.

It belongs to the class-I aminoacyl-tRNA synthetase family. GluQ subfamily. The cofactor is Zn(2+).

Its function is as follows. Catalyzes the tRNA-independent activation of glutamate in presence of ATP and the subsequent transfer of glutamate onto a tRNA(Asp). Glutamate is transferred on the 2-amino-5-(4,5-dihydroxy-2-cyclopenten-1-yl) moiety of the queuosine in the wobble position of the QUC anticodon. In Citrobacter koseri (strain ATCC BAA-895 / CDC 4225-83 / SGSC4696), this protein is Glutamyl-Q tRNA(Asp) synthetase.